The following is a 214-amino-acid chain: Small ribosomal subunit protein uS3c (214 aa).

Residues 39 to 111 (IRTYIHTISK…QLTINVLEVE (73 aa)) enclose the KH type-2 domain.

Belongs to the universal ribosomal protein uS3 family. Part of the 30S ribosomal subunit.

The protein resides in the plastid. The protein localises to the chloroplast. The protein is Small ribosomal subunit protein uS3c (rps3) of Phaeodactylum tricornutum (strain CCAP 1055/1).